Consider the following 548-residue polypeptide: Sesquiterpene synthase 9 (548 aa).

Positions 300, 304, and 453 each coordinate Mg(2+). A DDXXD motif motif is present at residues 300-304 (DDTFD).

It belongs to the terpene synthase family. Tpsa subfamily. The cofactor is Mg(2+). Requires Mn(2+) as cofactor. As to expression, mostly expressed in stem and trichomes, to a lower extent in roots, leaves and flowers and, at low levels, in fruits.

Its subcellular location is the cytoplasm. It carries out the reaction (2E,6E)-farnesyl diphosphate = germacrene C + diphosphate. The enzyme catalyses (2E)-geranyl diphosphate = terpinolene + diphosphate. It catalyses the reaction (2E)-geranyl diphosphate = limonene + diphosphate. The catalysed reaction is (2E)-geranyl diphosphate = beta-myrcene + diphosphate. It carries out the reaction (2Z,6Z)-farnesyl diphosphate = germacrene C + diphosphate. It functions in the pathway secondary metabolite biosynthesis; terpenoid biosynthesis. Involved in the biosynthesis of germacrene C, one of the most abundant sesquiterpene in the leaf oil of tomato. Produces mainly germacrene C, but also smaller amounts of germacrene A, B and D when used with farnesyl diphosphate (FPP) as substrate; able to use both (2E,6E)-farnesyl diphosphate ((EE)-FPP) and (2Z,6Z)-farnesyl diphosphate ((ZZ)-FPP). No or low activity with geranylgeranyl diphosphate (GGPP). Can act with a low efficiency as a monoterpene synthase with geranyl diphosphate (GPP) as substrate, thus producing beta-myrcene, limonene and terpinolene. In Solanum lycopersicum (Tomato), this protein is Sesquiterpene synthase 9.